Consider the following 598-residue polypeptide: Rho-related protein racA (598 aa).

11-17 serves as a coordination point for GTP; sequence DGAVGKS. The short motif at 32 to 40 is the Effector region element; it reads YVPTVFDNY. Residues 57–61 and 115–118 each bind GTP; these read DTAGQ and TKND. Residues 175–210 are disordered; sequence ASAKKKGGFFSSSSSSSSSSSSKSSEKSVPIPPVMP. Residues 182 to 197 show a composition bias toward low complexity; it reads GFFSSSSSSSSSSSSK. 2 consecutive BTB domains span residues 239-344 and 405-472; these read SDVK…NYLD and SDIQ…PIEE.

It in the N-terminal section; belongs to the small GTPase superfamily. Rho family. Interacts with pakB.

The sequence is that of Rho-related protein racA (racA) from Dictyostelium discoideum (Social amoeba).